A 447-amino-acid chain; its full sequence is ATP-dependent protease ATPase subunit HslU (447 aa).

ATP-binding positions include I18, 60–65 (GVGKTE), D259, E325, and R397.

This sequence belongs to the ClpX chaperone family. HslU subfamily. In terms of assembly, a double ring-shaped homohexamer of HslV is capped on each side by a ring-shaped HslU homohexamer. The assembly of the HslU/HslV complex is dependent on binding of ATP.

It is found in the cytoplasm. In terms of biological role, ATPase subunit of a proteasome-like degradation complex; this subunit has chaperone activity. The binding of ATP and its subsequent hydrolysis by HslU are essential for unfolding of protein substrates subsequently hydrolyzed by HslV. HslU recognizes the N-terminal part of its protein substrates and unfolds these before they are guided to HslV for hydrolysis. The sequence is that of ATP-dependent protease ATPase subunit HslU from Burkholderia pseudomallei (strain 668).